Consider the following 252-residue polypeptide: Eukaryotic translation initiation factor 3 subunit J (252 aa).

Disordered stretches follow at residues 24–107 (VPAG…TPEE) and 209–232 (KQSK…TMKD). Residues 36–56 (EDEEDDVKDNWDDEEEEEEVK) are compositionally biased toward acidic residues. Basic and acidic residues predominate over residues 57 to 107 (EAEVKQEPKVSEKKKIAEKIKEKEKQQKKKQEELKKRLEAPEEHKELTPEE). Positions 65 to 130 (KVSEKKKIAE…ESDLELAKET (66 aa)) form a coiled coil.

This sequence belongs to the eIF-3 subunit J family. In terms of assembly, component of the eukaryotic translation initiation factor 3 (eIF-3) complex, which is composed of 13 subunits: EIF3A, EIF3B, EIF3C, EIF3D, EIF3E, EIF3F, EIF3G, EIF3H, EIF3I, EIF3J, EIF3K, EIF3L and EIF3M.

Its subcellular location is the cytoplasm. Its function is as follows. Component of the eukaryotic translation initiation factor 3 (eIF-3) complex, which is involved in protein synthesis of a specialized repertoire of mRNAs and, together with other initiation factors, stimulates binding of mRNA and methionyl-tRNAi to the 40S ribosome. The eIF-3 complex specifically targets and initiates translation of a subset of mRNAs involved in cell proliferation. The protein is Eukaryotic translation initiation factor 3 subunit J of Gallus gallus (Chicken).